We begin with the raw amino-acid sequence, 688 residues long: DNA-directed RNA polymerase subunit beta' (688 aa).

The Zn(2+) site is built by Cys69, Cys71, Cys87, and Cys90. Mg(2+) is bound by residues Asp493, Asp495, and Asp497.

Belongs to the RNA polymerase beta' chain family. RpoC1 subfamily. As to quaternary structure, in plastids the minimal PEP RNA polymerase catalytic core is composed of four subunits: alpha, beta, beta', and beta''. When a (nuclear-encoded) sigma factor is associated with the core the holoenzyme is formed, which can initiate transcription. Requires Mg(2+) as cofactor. It depends on Zn(2+) as a cofactor.

Its subcellular location is the plastid. The protein localises to the chloroplast. The enzyme catalyses RNA(n) + a ribonucleoside 5'-triphosphate = RNA(n+1) + diphosphate. Its function is as follows. DNA-dependent RNA polymerase catalyzes the transcription of DNA into RNA using the four ribonucleoside triphosphates as substrates. The polypeptide is DNA-directed RNA polymerase subunit beta' (Chloranthus spicatus (Chulantree)).